A 461-amino-acid chain; its full sequence is MADREEHQGLLDGDRDEDEGDKAPSVHLNPICDPNHLLHRILVLIFMCFLGFGSYFCYDNPAALQSQVIQDMNLNTASFMQLYAWYSWPNVVLCFLGGFLLDRVFGIRLGTVIFSLFVLVGQIIFAAGALANHFWLMNVGRFVFGIGGESLAVAQNTYAVNWFKGKELNLVFGLQLSMARLGSTVNMNVIGWVYGRIQMSMGSAGPTTLGITLMIAASTCLFSLICALVLGFLDKRAERILNKEQGKTGEVIKLTDVKDFSVSLWLIFIICVAYYVAIFPFIGLGQVFFIEKFGFTPVQARAINSVVYIISAPASPLLGFLVDKTGRNVMWVMLAVITTLLSHMMLAFTFWNPWIAMSLLGVSYSLLACALWPMVAFVVPEHQLGTAYGFMQSIQNLGLAVMSIAAGSILDVRGYLFLEVFFIACLCMALLAVVLLYLFDYYKEGGLNLSAATRSKRAKPE.

A compositionally biased stretch (basic and acidic residues) spans 1–13 (MADREEHQGLLDG). Positions 1 to 22 (MADREEHQGLLDGDRDEDEGDK) are disordered. Positions 10 to 11 (LL) match the Dileucine internalization motif motif. 10 helical membrane passes run 37-57 (LLHR…SYFC), 81-101 (QLYA…GFLL), 111-131 (TVIF…GALA), 134-154 (FWLM…LAVA), 264-284 (LWLI…FIGL), 302-322 (AINS…GFLV), 331-351 (WVML…FTFW), 359-379 (LLGV…AFVV), 390-410 (FMQS…GSIL), and 416-436 (LFLE…VVLL).

The protein belongs to the major facilitator superfamily. In terms of assembly, homodimer. Interacts with lysosomal protein GLMP (via lumenal domain); the interaction starts while both proteins are still in the endoplasmic reticulum and is required for stabilization of MFSD1 in lysosomes but has no direct effect on its targeting to lysosomes or transporter activity.

The protein resides in the lysosome membrane. It carries out the reaction L-alpha-aminoacyl-L-arginine(out) = L-alpha-aminoacyl-L-arginine(in). The enzyme catalyses L-arginyl-L-alpha-amino acid(out) = L-arginyl-L-alpha-amino acid(in). The catalysed reaction is L-arginyl-glycine(out) = L-arginyl-glycine(in). It catalyses the reaction L-alpha-aminoacyl-L-lysine(out) = L-alpha-aminoacyl-L-lysine(in). It carries out the reaction L-aspartyl-L-lysine(out) = L-aspartyl-L-lysine(in). The enzyme catalyses L-alanyl-L-lysine(out) = L-alanyl-L-lysine(in). The catalysed reaction is L-lysyl-L-alpha-amino acid(out) = L-lysyl-L-alpha-amino acid(in). It catalyses the reaction L-lysyl-L-alanine(out) = L-lysyl-L-alanine(in). It carries out the reaction L-lysyl-L-lysine(out) = L-lysyl-L-lysine(in). The enzyme catalyses L-lysyl-glycine(out) = L-lysyl-glycine(in). The catalysed reaction is L-alpha-aminoacyl-L-histidine(out) = L-alpha-aminoacyl-L-histidine(in). It catalyses the reaction L-histidyl-L-alpha-amino acid(out) = L-histidyl-L-alpha-amino acid(in). It carries out the reaction L-histidyl-glycine(out) = L-histidyl-glycine(in). Lysosomal dipeptide uniporter that selectively exports lysine, arginine or histidine-containing dipeptides with a net positive charge from the lysosome lumen into the cytosol. Could play a role in a specific type of protein O-glycosylation indirectly regulating macrophages migration and tissue invasion. Also essential for liver homeostasis. The sequence is that of Lysosomal dipeptide transporter MFSD1 (mfsd1) from Danio rerio (Zebrafish).